Consider the following 502-residue polypeptide: Probable glycine dehydrogenase (decarboxylating) subunit 2 (502 aa).

Lys273 bears the N6-(pyridoxal phosphate)lysine mark.

This sequence belongs to the GcvP family. C-terminal subunit subfamily. As to quaternary structure, the glycine cleavage system is composed of four proteins: P, T, L and H. In this organism, the P 'protein' is a heterodimer of two subunits. Requires pyridoxal 5'-phosphate as cofactor.

The catalysed reaction is N(6)-[(R)-lipoyl]-L-lysyl-[glycine-cleavage complex H protein] + glycine + H(+) = N(6)-[(R)-S(8)-aminomethyldihydrolipoyl]-L-lysyl-[glycine-cleavage complex H protein] + CO2. Its function is as follows. The glycine cleavage system catalyzes the degradation of glycine. The P protein binds the alpha-amino group of glycine through its pyridoxal phosphate cofactor; CO(2) is released and the remaining methylamine moiety is then transferred to the lipoamide cofactor of the H protein. This Thermococcus onnurineus (strain NA1) protein is Probable glycine dehydrogenase (decarboxylating) subunit 2.